The primary structure comprises 279 residues: Thymidylate synthase 1 (279 aa).

DUMP is bound at residue 141-142 (RR). Cys161 (nucleophile) is an active-site residue. DUMP contacts are provided by residues 181 to 184 (RSND), Asn192, and 222 to 224 (HVY). Asp184 contributes to the (6R)-5,10-methylene-5,6,7,8-tetrahydrofolate binding site. Ala278 is a binding site for (6R)-5,10-methylene-5,6,7,8-tetrahydrofolate.

Belongs to the thymidylate synthase family. Bacterial-type ThyA subfamily. In terms of assembly, homodimer.

The protein localises to the cytoplasm. It catalyses the reaction dUMP + (6R)-5,10-methylene-5,6,7,8-tetrahydrofolate = 7,8-dihydrofolate + dTMP. The protein operates within pyrimidine metabolism; dTTP biosynthesis. Catalyzes the reductive methylation of 2'-deoxyuridine-5'-monophosphate (dUMP) to 2'-deoxythymidine-5'-monophosphate (dTMP) while utilizing 5,10-methylenetetrahydrofolate (mTHF) as the methyl donor and reductant in the reaction, yielding dihydrofolate (DHF) as a by-product. This enzymatic reaction provides an intracellular de novo source of dTMP, an essential precursor for DNA biosynthesis. The polypeptide is Thymidylate synthase 1 (Bacillus spizizenii (strain ATCC 23059 / NRRL B-14472 / W23) (Bacillus subtilis subsp. spizizenii)).